Here is a 750-residue protein sequence, read N- to C-terminus: Iron-sulfur clusters transporter ATM1, mitochondrial (750 aa).

The transit peptide at 1–16 directs the protein to the mitochondrion; the sequence is MFIRNVKLIKPSPVRF. The Mitochondrial matrix portion of the chain corresponds to 17 to 124; that stretch reads ISPIPFSFPI…PKNNLNFKIR (108 aa). 2 stretches are compositionally biased toward low complexity: residues 43-75 and 87-100; these read TSNF…KTLS and DNDT…SSEN. Residues 43 to 100 are disordered; it reads TSNFKSTSSSSSLKSTSTSTSTSTSKTTPKTLSKPPPKVKPPIQDNDTTSSGSSSSEN. The chain crosses the membrane as a helical span at residues 125–146; the sequence is VIIALSLLVGAKILNVQVPFYF. Residues 125–415 enclose the ABC transmembrane type-1 domain; that stretch reads VIIALSLLVG…LGSVYRELKQ (291 aa). The Mitochondrial intermembrane segment spans residues 147–169; it reads KQIIDTMNIDWTNEVGVFSTVIG. The helical transmembrane segment at 170-193 threads the bilayer; that stretch reads SLILAYGGARFGAVLFGELRNAIF. Topologically, residues 194–242 are mitochondrial matrix; the sequence is ASVAQSAIRRVAYNTFVKLLNMDLQFHLSRQTGGLTRAIDRGTKGISYV. A helical transmembrane segment spans residues 243–266; sequence LSAMVFHIIPITLEISIVCGILTY. Asparagine 267 is a topological domain (mitochondrial intermembrane). The chain crosses the membrane as a helical span at residues 268 to 288; sequence YGASFAAMTFVTMLAYSIFTI. The Mitochondrial matrix segment spans residues 289-354; sequence QTTAWRTKFR…SSVKIATSLA (66 aa). Residues 294-298 and 357-360 each bind glutathione; these read RTKFR and NSGQ. The chain crosses the membrane as a helical span at residues 355 to 373; it reads FLNSGQNFIFTSALTAMMY. The Mitochondrial intermembrane segment spans residues 374–388; the sequence is MGCQGVYTGELTVGD. A helical membrane pass occupies residues 389–410; sequence LVLINQLVFQLSVPLNFLGSVY. Glycine 407 serves as a coordination point for glutathione. Residues 411 to 750 lie on the Mitochondrial matrix side of the membrane; sequence RELKQSLLDM…LFNSQTFEKK (340 aa). Residues 437 to 462 are disordered; that stretch reads PNAPPLKLNNNNNNNNNNNNNNNNSL. Low complexity predominate over residues 445–460; the sequence is NNNNNNNNNNNNNNNN. Residues 466–702 enclose the ABC transporter domain; it reads IRFENVSFGY…QPNSLYAQLW (237 aa). ATP is bound by residues tyrosine 475 and 499–510; that span reads GPSGSGKSTILR.

The protein belongs to the ABC transporter superfamily. ABCB family. Heavy Metal importer (TC 3.A.1.210) subfamily. Homodimer.

It localises to the mitochondrion inner membrane. Its function is as follows. Performs an essential function in the generation of cytoplasmic iron-sulfur proteins by mediating the ATP-dependent export of Fe/S cluster precursors synthesized by NFS1 and other mitochondrial proteins. Hydrolyzes ATP. Binds glutathione and may function by transporting a glutathione-conjugated iron-sulfur compound. The protein is Iron-sulfur clusters transporter ATM1, mitochondrial of Candida albicans (strain SC5314 / ATCC MYA-2876) (Yeast).